A 370-amino-acid polypeptide reads, in one-letter code: Pyruvate dehydrogenase E1 component subunit alpha (370 aa).

As to quaternary structure, heterodimer of an alpha and a beta chain. The cofactor is thiamine diphosphate.

It carries out the reaction N(6)-[(R)-lipoyl]-L-lysyl-[protein] + pyruvate + H(+) = N(6)-[(R)-S(8)-acetyldihydrolipoyl]-L-lysyl-[protein] + CO2. In terms of biological role, the pyruvate dehydrogenase complex catalyzes the overall conversion of pyruvate to acetyl-CoA and CO(2). It contains multiple copies of three enzymatic components: pyruvate dehydrogenase (E1), dihydrolipoamide acetyltransferase (E2) and lipoamide dehydrogenase (E3). The sequence is that of Pyruvate dehydrogenase E1 component subunit alpha (pdhA) from Staphylococcus epidermidis (strain ATCC 35984 / DSM 28319 / BCRC 17069 / CCUG 31568 / BM 3577 / RP62A).